The chain runs to 1203 residues: MIDVNNFEYMKIGLASPDKIRSWSYGEVKKPETINYRTLKPEKDGLFCERIFGPQKDWECHCGKYKRVRYKGVVCDRCGVEVTRAKVRRERMGHIELAAPVSHIWYFKGIPSRMGLVLDMSPRALEEVIYFASYVVTESGDTPLDKKQLLSEKEYRAYRDRYGSTFHAAMGAEAIKKLLQDIDLDKEVDFLKEELKTAQGQRRTRAIKRLEVLEAFRNSGNHPSWMILEVLPVIPPELRPMVQLDGGRFATSDLNDLYRRVINRNNRLKRLLDLGAPSIIVQNEKRMLQEAVDALIDNGRRGRPVTGPGNRPLKSLSHMLKGKQGRFRQNLLGKRVDYSGRSVIVVGPNLKMYQCGLPKEMALELFKPFVMKELVGKGLAHNIKSAKRKIERVHPEVWDVLESVIKEHPVLLNRAPTLHRLGIQAFEPTLVEGRAIRLHPLVCTAYNADFDGDQMAVHVPLSSEAQAEARILMLAAQNILNPKDGKPVVTPSQDMVLGNYYLTLEREGAIGEGMVFKDANEAILAYQNGYVHLHTRVAVAASSVNNVTFTEEQKSKLLLTTVGKLIFNEILPESFPYINEPTNSNLEKETPAEYFVEKGANIKEIIASREEVAPFSKKILGNIIAEVFKRFQITETSRMLDRMKNLGFKYSTKAGITVGVSDILVLGEKDEILHEAQAKVDNVIKQFRRGLITEEERYDRVISIWSNAKDVIQGKLMKSLNKRNPIFMMSDSGARGNASNFTQLAGMRGLMANPSGRIIELPIKSSFREGLTVLEYFISTHGARKGLADTALKTADSGYLTRRLVDVAQDVIVRQDDCGTDRGLLIGAIKEGNEVIESLYDRLVGRFARKTVKHPETGEVLVVENQLITEDIAHIVEKSGVETVNIRSAFTCNTRHGVCKKCYGRNLATGTDVEVGEAVGIIAAQSIGEPGTQLTMRTFHTGGVAGDDITQGLPRIQEIFEARNPKGQAVISEIDGVIAAINDVKDRQEVVVQGEVEARTYAIPYGARLKVTLGQPISHGKELTEGSIDPKELLKVTDITAVQEYLLREVQKVYRMQGVEIGDKHVEVMVRQMLRKVRVSDAGETDVLPGTLLDIHQFTDANAKVLLKGKQPATARPVLLGITKASLETDSFLSAASFQETTRVLTDAAIKGKRDELLGLKENVIIGKLVPAGTGMNRYRKVDLVKTTQDNMNVENDEVYVEQ.

Zn(2+)-binding residues include Cys60, Cys62, Cys75, and Cys78. Residues Asp449, Asp451, and Asp453 each contribute to the Mg(2+) site. Residues Cys818, Cys892, Cys899, and Cys902 each contribute to the Zn(2+) site.

Belongs to the RNA polymerase beta' chain family. In terms of assembly, the RNAP catalytic core consists of 2 alpha, 1 beta, 1 beta' and 1 omega subunit. When a sigma factor is associated with the core the holoenzyme is formed, which can initiate transcription. It depends on Mg(2+) as a cofactor. The cofactor is Zn(2+).

The enzyme catalyses RNA(n) + a ribonucleoside 5'-triphosphate = RNA(n+1) + diphosphate. Functionally, DNA-dependent RNA polymerase catalyzes the transcription of DNA into RNA using the four ribonucleoside triphosphates as substrates. The polypeptide is DNA-directed RNA polymerase subunit beta' (Bacillus mycoides (strain KBAB4) (Bacillus weihenstephanensis)).